The primary structure comprises 363 residues: Molybdenum import ATP-binding protein ModC (363 aa).

In terms of domain architecture, ABC transporter spans 1 to 232 (MLDLDLRRRQ…PGLRPLTGRY (232 aa)). Residue 30–37 (GRSGSGKT) coordinates ATP. The Mop domain occupies 292–358 (RVSIRNVLPA…IKALTIARGD (67 aa)).

Belongs to the ABC transporter superfamily. Molybdate importer (TC 3.A.1.8) family. As to quaternary structure, the complex is composed of two ATP-binding proteins (ModC), two transmembrane proteins (ModB) and a solute-binding protein (ModA).

It localises to the cell inner membrane. The catalysed reaction is molybdate(out) + ATP + H2O = molybdate(in) + ADP + phosphate + H(+). Its function is as follows. Part of the ABC transporter complex ModABC involved in molybdenum import. Responsible for energy coupling to the transport system. The sequence is that of Molybdenum import ATP-binding protein ModC from Paramagnetospirillum magneticum (strain ATCC 700264 / AMB-1) (Magnetospirillum magneticum).